We begin with the raw amino-acid sequence, 127 residues long: Holo-[acyl-carrier-protein] synthase (127 aa).

2 residues coordinate Mg(2+): Asp9 and Glu58.

This sequence belongs to the P-Pant transferase superfamily. AcpS family. Mg(2+) serves as cofactor.

The protein localises to the cytoplasm. The enzyme catalyses apo-[ACP] + CoA = holo-[ACP] + adenosine 3',5'-bisphosphate + H(+). Transfers the 4'-phosphopantetheine moiety from coenzyme A to a Ser of acyl-carrier-protein. In Shewanella baltica (strain OS195), this protein is Holo-[acyl-carrier-protein] synthase.